A 316-amino-acid chain; its full sequence is Elongation factor Ts, mitochondrial (316 aa).

The transit peptide at 1–18 (MFARAPFVRLLSTTSRNL) directs the protein to the mitochondrion. Residues 245 to 269 (EAAESVKTQEGLRSQEGHDPNADPV) are disordered.

The protein belongs to the EF-Ts family.

It is found in the mitochondrion. Its function is as follows. Associates with the EF-Tu.GDP complex and induces the exchange of GDP to GTP. It remains bound to the aminoacyl-tRNA.EF-Tu.GTP complex up to the GTP hydrolysis stage on the ribosome. The protein is Elongation factor Ts, mitochondrial of Caenorhabditis elegans.